The primary structure comprises 393 residues: NAD(P)H-quinone oxidoreductase subunit H, chloroplastic (393 aa).

This sequence belongs to the complex I 49 kDa subunit family. In terms of assembly, NDH is composed of at least 16 different subunits, 5 of which are encoded in the nucleus.

The protein localises to the plastid. It is found in the chloroplast thylakoid membrane. It catalyses the reaction a plastoquinone + NADH + (n+1) H(+)(in) = a plastoquinol + NAD(+) + n H(+)(out). It carries out the reaction a plastoquinone + NADPH + (n+1) H(+)(in) = a plastoquinol + NADP(+) + n H(+)(out). Functionally, NDH shuttles electrons from NAD(P)H:plastoquinone, via FMN and iron-sulfur (Fe-S) centers, to quinones in the photosynthetic chain and possibly in a chloroplast respiratory chain. The immediate electron acceptor for the enzyme in this species is believed to be plastoquinone. Couples the redox reaction to proton translocation, and thus conserves the redox energy in a proton gradient. The sequence is that of NAD(P)H-quinone oxidoreductase subunit H, chloroplastic from Manihot esculenta (Cassava).